The following is a 71-amino-acid chain: Small ribosomal subunit protein eS17 (71 aa).

The protein belongs to the eukaryotic ribosomal protein eS17 family.

This chain is Small ribosomal subunit protein eS17, found in Pyrobaculum neutrophilum (strain DSM 2338 / JCM 9278 / NBRC 100436 / V24Sta) (Thermoproteus neutrophilus).